Reading from the N-terminus, the 50-residue chain is Small ribosomal subunit protein uS14 (50 aa).

4 residues coordinate Zn(2+): C15, C18, C33, and C36.

Belongs to the universal ribosomal protein uS14 family. Zinc-binding uS14 subfamily. In terms of assembly, part of the 30S ribosomal subunit. Zn(2+) serves as cofactor.

In terms of biological role, binds 16S rRNA, required for the assembly of 30S particles. The protein is Small ribosomal subunit protein uS14 of Methanosarcina barkeri (strain Fusaro / DSM 804).